A 347-amino-acid chain; its full sequence is Phenylalanine--tRNA ligase alpha subunit (347 aa).

Glu261 contributes to the Mg(2+) binding site.

The protein belongs to the class-II aminoacyl-tRNA synthetase family. Phe-tRNA synthetase alpha subunit type 1 subfamily. As to quaternary structure, tetramer of two alpha and two beta subunits. Mg(2+) is required as a cofactor.

The protein localises to the cytoplasm. The catalysed reaction is tRNA(Phe) + L-phenylalanine + ATP = L-phenylalanyl-tRNA(Phe) + AMP + diphosphate + H(+). This chain is Phenylalanine--tRNA ligase alpha subunit, found in Streptococcus equi subsp. zooepidemicus (strain MGCS10565).